A 294-amino-acid chain; its full sequence is Acetyl-coenzyme A carboxylase carboxyl transferase subunit beta (294 aa).

One can recognise a CoA carboxyltransferase N-terminal domain in the interval 29–294; it reads LWEKCPECGQ…TQVVKLQTNA (266 aa). Cys33, Cys36, Cys52, and Cys55 together coordinate Zn(2+). Residues 33–55 form a C4-type zinc finger; the sequence is CPECGQVVYRKDLIDNCSVCSNC.

This sequence belongs to the AccD/PCCB family. Acetyl-CoA carboxylase is a heterohexamer composed of biotin carboxyl carrier protein (AccB), biotin carboxylase (AccC) and two subunits each of ACCase subunit alpha (AccA) and ACCase subunit beta (AccD). It depends on Zn(2+) as a cofactor.

The protein resides in the cytoplasm. The enzyme catalyses N(6)-carboxybiotinyl-L-lysyl-[protein] + acetyl-CoA = N(6)-biotinyl-L-lysyl-[protein] + malonyl-CoA. It participates in lipid metabolism; malonyl-CoA biosynthesis; malonyl-CoA from acetyl-CoA: step 1/1. In terms of biological role, component of the acetyl coenzyme A carboxylase (ACC) complex. Biotin carboxylase (BC) catalyzes the carboxylation of biotin on its carrier protein (BCCP) and then the CO(2) group is transferred by the transcarboxylase to acetyl-CoA to form malonyl-CoA. This Prochlorococcus marinus (strain NATL2A) protein is Acetyl-coenzyme A carboxylase carboxyl transferase subunit beta.